The sequence spans 375 residues: N-acetyldiaminopimelate deacetylase (375 aa).

The active site involves D69. Residue E128 is the Proton acceptor of the active site.

This sequence belongs to the peptidase M20A family. N-acetyldiaminopimelate deacetylase subfamily.

It catalyses the reaction N-acetyl-(2S,6S)-2,6-diaminopimelate + H2O = (2S,6S)-2,6-diaminopimelate + acetate. It participates in amino-acid biosynthesis; L-lysine biosynthesis via DAP pathway; LL-2,6-diaminopimelate from (S)-tetrahydrodipicolinate (acetylase route): step 3/3. Functionally, catalyzes the conversion of N-acetyl-diaminopimelate to diaminopimelate and acetate. The sequence is that of N-acetyldiaminopimelate deacetylase from Streptococcus suis (strain 05ZYH33).